Consider the following 368-residue polypeptide: Ferrochelatase (368 aa).

Fe cation-binding residues include histidine 209 and glutamate 290.

This sequence belongs to the ferrochelatase family.

The protein localises to the cytoplasm. It carries out the reaction heme b + 2 H(+) = protoporphyrin IX + Fe(2+). It participates in porphyrin-containing compound metabolism; protoheme biosynthesis; protoheme from protoporphyrin-IX: step 1/1. Its function is as follows. Catalyzes the ferrous insertion into protoporphyrin IX. In Herminiimonas arsenicoxydans, this protein is Ferrochelatase.